The primary structure comprises 205 residues: UPF0316 protein Cthe_2213 (205 aa).

Transmembrane regions (helical) follow at residues Leu15 to Val37, Leu44 to Met64, and Phe70 to Ile90.

It belongs to the UPF0316 family.

It localises to the cell membrane. This chain is UPF0316 protein Cthe_2213, found in Acetivibrio thermocellus (strain ATCC 27405 / DSM 1237 / JCM 9322 / NBRC 103400 / NCIMB 10682 / NRRL B-4536 / VPI 7372) (Clostridium thermocellum).